Here is an 88-residue protein sequence, read N- to C-terminus: Small ribosomal subunit protein bS20 (88 aa).

The disordered stretch occupies residues 1–28 (MANIKSQIKRNRQNEKRRLRNKSVKSSL). The span at 7–23 (QIKRNRQNEKRRLRNKS) shows a compositional bias: basic residues.

Belongs to the bacterial ribosomal protein bS20 family.

In terms of biological role, binds directly to 16S ribosomal RNA. This is Small ribosomal subunit protein bS20 from Salinispora tropica (strain ATCC BAA-916 / DSM 44818 / JCM 13857 / NBRC 105044 / CNB-440).